We begin with the raw amino-acid sequence, 346 residues long: Putative D-alanine--D-lactate ligase (346 aa).

The ATP-grasp domain maps to 137–338 (YVVARSAGIA…LSEVIDRTLS (202 aa)). 163-216 (RLTYPVFVKPARSGSSFGVSKVCRPEDLATAVESARRYDTKVLIEAAVVGSEVG) contributes to the ATP binding site. 3 residues coordinate Mg(2+): Asp-292, Glu-305, and Asn-307.

The protein belongs to the D-alanine--D-alanine ligase family. Mg(2+) serves as cofactor. Requires Mn(2+) as cofactor.

It is found in the cell membrane. Functionally, required for resistance to glycopeptides antibiotics. D-Ala--D-Ala ligase of altered specificity which catalyzes ester bond formation between D-Ala and various D-hydroxy acids; producing a peptidoglycan which does not terminate by D-alanine but by D-lactate, thus preventing vancomycin binding. The chain is Putative D-alanine--D-lactate ligase from Streptomyces coelicolor (strain ATCC BAA-471 / A3(2) / M145).